A 92-amino-acid polypeptide reads, in one-letter code: PqqA binding protein (92 aa).

It belongs to the PqqD family. Monomer. Interacts with PqqE.

It participates in cofactor biosynthesis; pyrroloquinoline quinone biosynthesis. Its function is as follows. Functions as a PqqA binding protein and presents PqqA to PqqE, in the pyrroloquinoline quinone (PQQ) biosynthetic pathway. The chain is PqqA binding protein from Pseudomonas paraeruginosa (strain DSM 24068 / PA7) (Pseudomonas aeruginosa (strain PA7)).